Reading from the N-terminus, the 154-residue chain is D-aminoacyl-tRNA deacylase (154 aa).

Positions glycine 142–proline 143 match the Gly-cisPro motif, important for rejection of L-amino acids motif.

Belongs to the DTD family. As to quaternary structure, homodimer.

The protein localises to the cytoplasm. It catalyses the reaction glycyl-tRNA(Ala) + H2O = tRNA(Ala) + glycine + H(+). It carries out the reaction a D-aminoacyl-tRNA + H2O = a tRNA + a D-alpha-amino acid + H(+). Functionally, an aminoacyl-tRNA editing enzyme that deacylates mischarged D-aminoacyl-tRNAs. Also deacylates mischarged glycyl-tRNA(Ala), protecting cells against glycine mischarging by AlaRS. Acts via tRNA-based rather than protein-based catalysis; rejects L-amino acids rather than detecting D-amino acids in the active site. By recycling D-aminoacyl-tRNA to D-amino acids and free tRNA molecules, this enzyme counteracts the toxicity associated with the formation of D-aminoacyl-tRNA entities in vivo and helps enforce protein L-homochirality. This is D-aminoacyl-tRNA deacylase (DTD1) from Yarrowia lipolytica (strain CLIB 122 / E 150) (Yeast).